The primary structure comprises 505 residues: Maturase K (505 aa).

This sequence belongs to the intron maturase 2 family. MatK subfamily.

The protein localises to the plastid. It is found in the chloroplast. Functionally, usually encoded in the trnK tRNA gene intron. Probably assists in splicing its own and other chloroplast group II introns. The chain is Maturase K from Gomphrena haageana (Haage's globe-amaranth).